The following is a 286-amino-acid chain: Serine carboxypeptidase-like (286 aa).

Ser4 is an active-site residue. 2 disulfide bridges follow: Cys83/Cys98 and Cys121/Cys126. Asp193 is a catalytic residue. Residue Cys196 coordinates substrate. Residue Asn227 is glycosylated (N-linked (GlcNAc...) asparagine). His250 is a catalytic residue.

This sequence belongs to the peptidase S10 family.

Its function is as follows. Involved in degradation of small peptides. This Pisum sativum (Garden pea) protein is Serine carboxypeptidase-like.